The chain runs to 853 residues: MSLSPDLPPSEEQNLEIQGSATNCYSVVIIEEQDDTFNDQPFYCEMCQQHFIDQCETHGPPSFTCDSPAALGTPQRALLTLPQGLVIGRSSISHAGLGVFNQGQTVPLGMHFGPFDGEEISEEKALDSANSWVICRGNNQYSYIDAEKDTHSNWMKFVVCSRSETEQNLVAFQQNGRILFRCCRPISPGQEFRVWYAEEYAQGLGAIWDKIWDNKCISQGSTEEQATQNCPCPFCHYSFPTLVYLHAHVKRTHPNEYAQFTQTHPLESEAHTPITEVEQCLVASDEALSTQTQPVTESPQEQISTQNGQPIHQTENSDEPDASDIYTAAGEISDEIHACVDCGRSFLRSCHLKRHQRTIHSKEKPYCCSQCKKCFSQATGLKRHQHTHQEQEKNIESPDRPSDIYPCTKCTLSFVAKINLHQHLKRHHHGEYLRLVESGSLTAETEEDHTEVCFDKQDPNYEPPSRGRKSTKNSLKGRGCPKKVAVGRPRGRPPKNKNLEVEVQKISPICTNCEQSFSDLETLKTHQCPRRDDEGDNVEHPQEASQYICGECIRAFSNLDLLKAHECIQQGEGSYCCPHCDLYFNRMCNLRRHERTIHSKEKPYCCTVCLKSFTQSSGLKRHQQSHLRRKSHRQSSALFTAAIFPCAYCPFSFTDERYLYKHIRRHHPEMSLKYLSFQEGGVLSVEKPHSCSQCCKSFSTIKGFKNHSCFKQGEKVYLCPDCGKAFSWFNSLKQHQRIHTGEKPYTCSQCGKSFVHSGQLNVHLRTHTGEKPFLCSQCGESFRQSGDLRRHEQKHSGVRPCQCPDCGKSFSRPQSLKAHQQLHVGTKLFPCTQCGKSFTRRYHLTRHHQKMHS.

Positions 83 to 197 constitute an SET domain; the sequence is QGLVIGRSSI…PGQEFRVWYA (115 aa). Residues 127–133 and Y196 contribute to the substrate site; that span reads DSANSWV. A C2H2-type 1 zinc finger spans residues 230–253; that stretch reads CPCPFCHYSFPTLVYLHAHVKRTH. Zn(2+) is bound at residue C235. 275 to 277 contributes to the S-adenosyl-L-methionine binding site; sequence TEV. Residues 291–314 are compositionally biased toward polar residues; the sequence is QTQPVTESPQEQISTQNGQPIHQT. Residues 291-322 are disordered; that stretch reads QTQPVTESPQEQISTQNGQPIHQTENSDEPDA. 3 C2H2-type zinc fingers span residues 337–360, 366–388, and 405–428; these read HACV…RTIH, YCCS…QHTH, and YPCT…KRHH. 341-342 provides a ligand contact to S-adenosyl-L-methionine; sequence DC. Residues C407, C410, H423, and H428 each coordinate Zn(2+). Residues 447-496 form a disordered region; the sequence is EDHTEVCFDKQDPNYEPPSRGRKSTKNSLKGRGCPKKVAVGRPRGRPPKN. Residues 450-459 show a composition bias toward basic and acidic residues; it reads TEVCFDKQDP. The segment at 508 to 528 adopts a C2H2-type 5; degenerate zinc-finger fold; that stretch reads PICTNCEQSFSDLETLKTHQC. The C2H2-type 6; degenerate zinc finger occupies 547 to 569; the sequence is YICGECIRAFSNLDLLKAHECIQ. C2H2-type zinc fingers lie at residues 575 to 598, 604 to 626, and 644 to 666; these read YCCP…RTIH, YCCT…QQSH, and FPCA…IRRH. The segment at 689–711 adopts a C2H2-type 10; degenerate zinc-finger fold; the sequence is HSCSQCCKSFSTIKGFKNHSCFK. 5 C2H2-type zinc fingers span residues 717–739, 745–767, 773–795, 801–823, and 829–852; these read YLCP…QRIH, YTCS…LRTH, FLCS…EQKH, CQCP…QQLH, and FPCT…QKMH. Zn(2+)-binding residues include C747, C750, H763, H767, C775, C778, H791, H795, C803, C806, H819, H823, C831, C834, and H847. Residues 755 to 845 form a DNA-binding region; the sequence is VHSGQLNVHL…KSFTRRYHLT (91 aa).

Belongs to the class V-like SAM-binding methyltransferase superfamily. As to quaternary structure, homodimer. In terms of processing, mono-methylated; automethylated. Tri-methylated; automethylated.

It is found in the nucleus. The protein localises to the chromosome. The catalysed reaction is L-lysyl-[protein] + S-adenosyl-L-methionine = N(6)-methyl-L-lysyl-[protein] + S-adenosyl-L-homocysteine + H(+). It catalyses the reaction N(6)-methyl-L-lysyl-[protein] + S-adenosyl-L-methionine = N(6),N(6)-dimethyl-L-lysyl-[protein] + S-adenosyl-L-homocysteine + H(+). The enzyme catalyses L-lysyl(4)-[histone H3] + 3 S-adenosyl-L-methionine = N(6),N(6),N(6)-trimethyl-L-lysyl(4)-[histone H3] + 3 S-adenosyl-L-homocysteine + 3 H(+). It carries out the reaction L-lysyl(36)-[histone H3] + 3 S-adenosyl-L-methionine = N(6),N(6),N(6)-trimethyl-L-lysyl(36)-[histone H3] + 3 S-adenosyl-L-homocysteine + 3 H(+). The catalysed reaction is L-lysyl(9)-[histone H3] + 3 S-adenosyl-L-methionine = N(6),N(6),N(6)-trimethyl-L-lysyl(9)-[histone H3] + 3 S-adenosyl-L-homocysteine + 3 H(+). It catalyses the reaction L-lysyl(20)-[histone H4] + S-adenosyl-L-methionine = N(6)-methyl-L-lysyl(20)-[histone H4] + S-adenosyl-L-homocysteine + H(+). The enzyme catalyses N(6)-methyl-L-lysyl(20)-[histone H4] + S-adenosyl-L-methionine = N(6),N(6)-dimethyl-L-lysyl(20)-[histone H4] + S-adenosyl-L-homocysteine + H(+). Histone methyltransferase that sequentially mono-, di-, and tri-methylates both 'Lys-4' (H3K4) and 'Lys-36' (H3K36) of histone H3 to produce respectively trimethylated 'Lys-4' (H3K4me3) and trimethylated 'Lys-36' (H3K36me3) histone H3 and plays a key role in meiotic prophase by determining hotspot localization thereby promoting meiotic recombination. Can also methylate all four core histones with H3 being the best substrate and the most highly modified. Is also able, on one hand, to mono and di-methylate H4K20 and on other hand to trimethylate H3K9 with the di-methylated H3K9 as the best substrate. During meiotic prophase, binds specific DNA sequences through its zinc finger domains thereby determining hotspot localization where it promotes local H3K4me3 and H3K36me3 enrichment on the same nucleosomes through its histone methyltransferase activity. Thereby promotes double-stranded breaks (DSB) formation, at this subset of PRDM9-binding sites, that initiates meiotic recombination for the proper meiotic progression. During meiotic progression hotspot-bound PRDM9 interacts with several complexes; in early leptonema binds CDYL and EHMT2 followed by EWSR1 and CXXC1 by the end of leptonema. EWSR1 joins PRDM9 with the chromosomal axis through REC8. In this way, controls the DSB repair pathway, pairing of homologous chromosomes and sex body formation. Moreover plays a central role in the transcriptional activation of genes during early meiotic prophase thanks to H3K4me3 and H3K36me3 enrichment that represents a specific tag for epigenetic transcriptional activation. In addition performs automethylation. Acetylation and phosphorylation of histone H3 attenuate or prevent histone H3 methylation. In Danio rerio (Zebrafish), this protein is Histone-lysine N-methyltransferase PRDM9 (prdm9).